The sequence spans 100 residues: Nucleoid-associated protein HPSH_00175 (100 aa).

It belongs to the YbaB/EbfC family. As to quaternary structure, homodimer.

The protein resides in the cytoplasm. Its subcellular location is the nucleoid. In terms of biological role, binds to DNA and alters its conformation. May be involved in regulation of gene expression, nucleoid organization and DNA protection. In Helicobacter pylori (strain Shi470), this protein is Nucleoid-associated protein HPSH_00175.